A 548-amino-acid polypeptide reads, in one-letter code: Mannosyltransferase APTG1 (548 aa).

The interval 1–23 is disordered; the sequence is MDIRKRKNAGGDGDGGADGASVN. 3 helical membrane passes run 41–61, 98–118, and 146–166; these read IFLFCLAFRVVNALLIQTYFN, LFAFLYKLLQVTGLDTPYIMI, and GNVATWSLFCQMANWFIFFCL. N-linked (GlcNAc...) asparagine glycosylation is present at N167. 7 helical membrane-spanning segments follow: residues 169-189, 204-224, 238-258, 260-280, 294-314, 320-340, and 342-362; these read TFSNCLETVLTIMGLYYWPCI, LVIAALACAIRPTSAVIWLYV, FIILEVIPIGSLVLGFTCLLD, LMYGSWVIVPLNFLKFNFLSS, FTQGFLVMLFTFTPFSIAGII, KLSALILWVLAIYSILGHKEF, and FVLPVLPIALIFSGYAFAQME. N-linked (GlcNAc...) asparagine glycosylation occurs at N382. The helical transmembrane segment at 392-412 threads the bilayer; that stretch reads LSVYFLLATNIPMALYMSLFH. N490 carries N-linked (GlcNAc...) asparagine glycosylation.

This sequence belongs to the glycosyltransferase 22 family. Mostly expressed, mainly in vascular tissues, in leaves, roots, stems, flowers, siliques and pollen, and, to a lower extent, in seedlings.

The protein resides in the endoplasmic reticulum membrane. Mannosyltransferase involved in glycosylphosphatidylinositol-anchor biosynthesis. Required for the pollen tube micropylar guidance and embryo development by regulating GPI-anchor mediated protein localization (e.g. COBL10 and A36). This Arabidopsis thaliana (Mouse-ear cress) protein is Mannosyltransferase APTG1.